Consider the following 268-residue polypeptide: Tryptophan synthase alpha chain (268 aa).

Residues glutamate 49 and aspartate 60 each act as proton acceptor in the active site.

Belongs to the TrpA family. In terms of assembly, tetramer of two alpha and two beta chains.

The enzyme catalyses (1S,2R)-1-C-(indol-3-yl)glycerol 3-phosphate + L-serine = D-glyceraldehyde 3-phosphate + L-tryptophan + H2O. It participates in amino-acid biosynthesis; L-tryptophan biosynthesis; L-tryptophan from chorismate: step 5/5. The alpha subunit is responsible for the aldol cleavage of indoleglycerol phosphate to indole and glyceraldehyde 3-phosphate. The chain is Tryptophan synthase alpha chain from Escherichia coli O6:H1 (strain CFT073 / ATCC 700928 / UPEC).